The sequence spans 791 residues: ATP-dependent 6-phosphofructokinase, platelet type (791 aa).

Met-1 bears the N-acetylmethionine mark. The tract at residues 1–399 (MDNKVSASPR…NLNTYKRLAI (399 aa)) is N-terminal catalytic PFK domain 1. Ser-6 is modified (phosphoserine). A Phosphoserine; by PKA modification is found at Ser-12. Ser-21 bears the Phosphoserine mark. Residues Gly-34, 97 to 98 (RS), and 127 to 130 (GSGS) each bind ATP. Residue Ser-142 is modified to Phosphoserine. Residues 173–175 (SID), Arg-210, 217–219 (MGR), Glu-273, Arg-301, and 307–310 (HVQR) each bind substrate. Residue Asp-175 is the Proton acceptor of the active site. Residue Ser-386 is modified to Phosphoserine. Lys-395 carries the N6-acetyllysine modification. Residues 400 to 411 (KLPDDKIQKSNC) form an interdomain linker region. Residues 412–791 (NVAVINVGAP…RGGPEEPAAI (380 aa)) form a C-terminal regulatory PFK domain 2 region. Arg-481 is a beta-D-fructose 2,6-bisphosphate binding site. Lys-486 bears the N6-acetyllysine mark. Residues 538-542 (TVSNN), Arg-576, 583-585 (MGG), and Glu-639 each bind beta-D-fructose 2,6-bisphosphate. O-linked (GlcNAc) serine glycosylation occurs at Ser-540. Tyr-651 carries the post-translational modification Phosphotyrosine. Beta-D-fructose 2,6-bisphosphate contacts are provided by residues Arg-665 and 671 to 674 (HMQQ). Position 688 is an N6-acetyllysine (Lys-688). Arg-744 contacts beta-D-fructose 2,6-bisphosphate.

The protein belongs to the phosphofructokinase type A (PFKA) family. ATP-dependent PFK group I subfamily. Eukaryotic two domain clade 'E' sub-subfamily. Homo- and heterotetramers. Phosphofructokinase (PFK) enzyme functions as a tetramer composed of different combinations of 3 types of subunits, called PFKM (M), PFKL (L) and PFKP (P). The composition of the PFK tetramer differs according to the tissue type it is present in. The kinetic and regulatory properties of the tetrameric enzyme are dependent on the subunit composition, hence can vary across tissues. Interacts with ATG4B; promoting phosphorylation of ATG4B. Requires Mg(2+) as cofactor. In terms of processing, glcNAcylation decreases enzyme activity. Phosphorylation at Ser-386 promotes interaction with ATG4B.

It localises to the cytoplasm. It catalyses the reaction beta-D-fructose 6-phosphate + ATP = beta-D-fructose 1,6-bisphosphate + ADP + H(+). The protein operates within carbohydrate degradation; glycolysis; D-glyceraldehyde 3-phosphate and glycerone phosphate from D-glucose: step 3/4. Allosterically activated by ADP, AMP, or fructose 2,6-bisphosphate, and allosterically inhibited by ATP or citrate. In terms of biological role, catalyzes the phosphorylation of D-fructose 6-phosphate to fructose 1,6-bisphosphate by ATP, the first committing step of glycolysis. The protein is ATP-dependent 6-phosphofructokinase, platelet type (PFKP) of Oryctolagus cuniculus (Rabbit).